A 265-amino-acid chain; its full sequence is 3-deoxy-manno-octulosonate cytidylyltransferase 2 (265 aa).

Belongs to the KdsB family.

It is found in the cytoplasm. The catalysed reaction is 3-deoxy-alpha-D-manno-oct-2-ulosonate + CTP = CMP-3-deoxy-beta-D-manno-octulosonate + diphosphate. The protein operates within nucleotide-sugar biosynthesis; CMP-3-deoxy-D-manno-octulosonate biosynthesis; CMP-3-deoxy-D-manno-octulosonate from 3-deoxy-D-manno-octulosonate and CTP: step 1/1. Its pathway is bacterial outer membrane biogenesis; lipopolysaccharide biosynthesis. Activates KDO (a required 8-carbon sugar) for incorporation into bacterial lipopolysaccharide in Gram-negative bacteria. The polypeptide is 3-deoxy-manno-octulosonate cytidylyltransferase 2 (Burkholderia lata (strain ATCC 17760 / DSM 23089 / LMG 22485 / NCIMB 9086 / R18194 / 383)).